The following is a 448-amino-acid chain: tRNA-2-methylthio-N(6)-dimethylallyladenosine synthase (448 aa).

An MTTase N-terminal domain is found at lysine 2–glutamate 120. [4Fe-4S] cluster is bound by residues cysteine 11, cysteine 47, cysteine 81, cysteine 158, cysteine 162, and cysteine 165. Residues arginine 144–glutamate 374 form the Radical SAM core domain. The TRAM domain occupies glutamate 377 to tyrosine 440.

This sequence belongs to the methylthiotransferase family. MiaB subfamily. Monomer. It depends on [4Fe-4S] cluster as a cofactor.

It is found in the cytoplasm. The catalysed reaction is N(6)-dimethylallyladenosine(37) in tRNA + (sulfur carrier)-SH + AH2 + 2 S-adenosyl-L-methionine = 2-methylsulfanyl-N(6)-dimethylallyladenosine(37) in tRNA + (sulfur carrier)-H + 5'-deoxyadenosine + L-methionine + A + S-adenosyl-L-homocysteine + 2 H(+). In terms of biological role, catalyzes the methylthiolation of N6-(dimethylallyl)adenosine (i(6)A), leading to the formation of 2-methylthio-N6-(dimethylallyl)adenosine (ms(2)i(6)A) at position 37 in tRNAs that read codons beginning with uridine. This is tRNA-2-methylthio-N(6)-dimethylallyladenosine synthase from Pelotomaculum thermopropionicum (strain DSM 13744 / JCM 10971 / SI).